A 708-amino-acid chain; its full sequence is Glutamate--tRNA ligase, cytoplasmic (708 aa).

Interaction with ARC1 regions lie at residues 106-115 (NLRTFILGGL) and 141-157 (KVDV…EMDP). 205-207 (RFP) contacts L-glutamate. A 'HIGH' region motif is present at residues 210–219 (PSGYLHIGHA). His215 is an ATP binding site. Asp241 is a binding site for L-glutamate. A Phosphothreonine modification is found at Thr300. Residues 382 to 386 (YDFCV) and Arg400 contribute to the L-glutamate site. ATP-binding positions include Glu403 and 437 to 441 (LLSKR). The 'KMSKS' region motif lies at 437–441 (LLSKR).

Belongs to the class-I aminoacyl-tRNA synthetase family. Glutamate--tRNA ligase type 2 subfamily. In terms of assembly, component of a yeast aminoacyl-tRNA synthase (aaRS) complex formed by methionyl-tRNA synthase MES1, glutamyl-tRNA synthase GUS1 and the tRNA aminoacylation cofactor ARC1 in a stoichiometric complex. Interacts (via N-ter) with ARC1 (via N-ter). Can also form a stable binary complex with ARC1 that is functional in terms of aminoacylation. ARC1 increases the affinity for cognate tRNAs due to the presence of a tRNA binding domain in the middle and C-terminal part of ARC1.

It localises to the cytoplasm. It is found in the mitochondrion. The catalysed reaction is tRNA(Glu) + L-glutamate + ATP = L-glutamyl-tRNA(Glu) + AMP + diphosphate. Its function is as follows. Catalyzes the attachment of glutamate to tRNA(Glu) in a two-step reaction: glutamate is first activated by ATP to form Glu-AMP and then transferred to the acceptor end of tRNA(Glu). In mitochondria, constitutes the nondiscriminating glutamyl-tRNA synthase that generates the mitochondrial mischarged glutamyl-tRNA(Gln) substrate for the tRNA-dependent amidotransferase (AdT), which generates mitochondrial glutaminyl-tRNA(Gln) by transamidation of glutamyl-tRNA(Gln). In Saccharomyces cerevisiae (strain ATCC 204508 / S288c) (Baker's yeast), this protein is Glutamate--tRNA ligase, cytoplasmic (GUS1).